We begin with the raw amino-acid sequence, 257 residues long: Uracil phosphoribosyltransferase homolog (257 aa).

Residues R81, R90, and E124–N127 each bind GTP. 5-phospho-alpha-D-ribose 1-diphosphate is bound at residue R134. GTP is bound by residues R151 and R180. Y186–T194 contributes to the 5-phospho-alpha-D-ribose 1-diphosphate binding site. Residue T247–F249 participates in uracil binding.

Belongs to the UPRTase family.

The protein localises to the cytoplasm. Its subcellular location is the nucleus. This Danio rerio (Zebrafish) protein is Uracil phosphoribosyltransferase homolog (uprt).